Consider the following 813-residue polypeptide: Protein translocase subunit SecA 2 (813 aa).

ATP-binding positions include Gln-105, 123-127, and Asp-525; that span reads GEGKT.

This sequence belongs to the SecA family. As to quaternary structure, monomer and homodimer. Part of the essential Sec protein translocation apparatus which comprises SecA, SecYEG and auxiliary proteins SecDF-YajC and YidC.

The protein localises to the cell inner membrane. Its subcellular location is the cytoplasm. It carries out the reaction ATP + H2O + cellular proteinSide 1 = ADP + phosphate + cellular proteinSide 2.. In terms of biological role, part of the Sec protein translocase complex. Interacts with the SecYEG preprotein conducting channel. Has a central role in coupling the hydrolysis of ATP to the transfer of proteins into and across the cell membrane, serving both as a receptor for the preprotein-SecB complex and as an ATP-driven molecular motor driving the stepwise translocation of polypeptide chains across the membrane. This Rhodopseudomonas palustris (strain BisA53) protein is Protein translocase subunit SecA 2.